Consider the following 180-residue polypeptide: SPbeta prophage-derived uncharacterized protein YosC (180 aa).

This chain is SPbeta prophage-derived uncharacterized protein YosC (yosC), found in Bacillus subtilis (strain 168).